The primary structure comprises 729 residues: Cytoplasmic polyadenylation element-binding protein 4 (729 aa).

Disordered regions lie at residues 20–49 (FPVR…NNNT) and 78–133 (EKAK…KEKI). A compositionally biased stretch (basic residues) spans 24 to 35 (FHPHLQPPHHHQ). Low complexity predominate over residues 83–96 (QQQEQQDPLEKQQL). 3 positions are modified to phosphoserine: Ser-97, Ser-99, and Ser-137. Residues 218–328 (FGGSFSPQIG…RGLNGGITPL (111 aa)) form a disordered region. The span at 232 to 249 (HHPHHPHFQHHHSQHQQQ) shows a compositional bias: basic residues. Phosphoserine occurs at positions 252 and 255. The segment covering 285-300 (WSSYQSPSPTPSSSWS) has biased composition (low complexity). Residues 301–313 (PGGGGYGGWGGSQ) show a composition bias toward gly residues. Residue Thr-326 is modified to Phosphothreonine. Phosphoserine is present on residues Ser-330 and Ser-332. RRM domains are found at residues 472-563 (RKVF…PWNL) and 580-662 (KTIF…PYVL). The tract at residues 541-543 (KLY) is RNA-binding. Zn(2+) is bound by residues Cys-667, Cys-675, Cys-684, Cys-689, Cys-694, Cys-697, His-702, and His-710.

This sequence belongs to the RRM CPEB family. Interacts with TOB1. Expressed in pancreas in islets and ductal cells (at protein level). Expressed in melanocytes.

It localises to the cytoplasm. Its subcellular location is the cell projection. The protein resides in the dendrite. It is found in the dendritic spine. The protein localises to the postsynaptic density. It localises to the axon. Its subcellular location is the growth cone. The protein resides in the endoplasmic reticulum. It is found in the perinuclear region. In terms of biological role, sequence-specific RNA-binding protein that binds to the cytoplasmic polyadenylation element (CPE), an uridine-rich sequence element (consensus sequence 5'-UUUUUAU-3') within the mRNA 3'-UTR. RNA binding results in a clear conformational change analogous to the Venus fly trap mechanism. Regulates activation of unfolded protein response (UPR) in the process of adaptation to ER stress in liver, by maintaining translation of CPE-regulated mRNAs in conditions in which global protein synthesis is inhibited. Required for cell cycle progression, specifically for cytokinesis and chromosomal segregation. Plays a role as an oncogene promoting tumor growth and progression by positively regulating translation of t-plasminogen activator/PLAT. Stimulates proliferation of melanocytes. In contrast to CPEB1 and CPEB3, does not play role in synaptic plasticity, learning and memory. This chain is Cytoplasmic polyadenylation element-binding protein 4 (CPEB4), found in Homo sapiens (Human).